A 458-amino-acid polypeptide reads, in one-letter code: Chromosomal replication initiator protein DnaA (458 aa).

The domain I, interacts with DnaA modulators stretch occupies residues 1–93; it reads MKTELSEVWQ…NVIEDPAAEP (93 aa). Residues 94-119 are domain II; it reads VDAPNVADLPAGTSAPAAEQNARLLG. Residues 120–336 are domain III, AAA+ region; it reads YINPKYTFET…GALTRVVAYA (217 aa). ATP-binding residues include Gly164, Gly166, Lys167, and Thr168. The tract at residues 337 to 458 is domain IV, binds dsDNA; the sequence is NMLKCPLTYD…EQLIARIRAE (122 aa).

This sequence belongs to the DnaA family. In terms of assembly, oligomerizes as a right-handed, spiral filament on DNA at oriC.

It localises to the cytoplasm. Plays an essential role in the initiation and regulation of chromosomal replication. ATP-DnaA binds to the origin of replication (oriC) to initiate formation of the DNA replication initiation complex once per cell cycle. Binds the DnaA box (a 9 base pair repeat at the origin) and separates the double-stranded (ds)DNA. Forms a right-handed helical filament on oriC DNA; dsDNA binds to the exterior of the filament while single-stranded (ss)DNA is stabiized in the filament's interior. The ATP-DnaA-oriC complex binds and stabilizes one strand of the AT-rich DNA unwinding element (DUE), permitting loading of DNA polymerase. After initiation quickly degrades to an ADP-DnaA complex that is not apt for DNA replication. Binds acidic phospholipids. This is Chromosomal replication initiator protein DnaA from Symbiobacterium thermophilum (strain DSM 24528 / JCM 14929 / IAM 14863 / T).